The chain runs to 282 residues: DegV domain-containing protein M6_Spy0690 (282 aa).

The 278-residue stretch at 3-280 folds into the DegV domain; that stretch reads LAVITDSTAT…EGAIAFGVTP (278 aa). Residues threonine 61 and serine 94 each contribute to the hexadecanoate site.

Its function is as follows. May bind long-chain fatty acids, such as palmitate, and may play a role in lipid transport or fatty acid metabolism. The polypeptide is DegV domain-containing protein M6_Spy0690 (Streptococcus pyogenes serotype M6 (strain ATCC BAA-946 / MGAS10394)).